A 171-amino-acid chain; its full sequence is MARPAPWWRLRLLAALVLALALVPVPSAWAGQTPRPAERGPPVRLFTEEELARYGGEEEDQPIYLAVKGVVFDVTSGKEFYGRGAPYNALAGKDSSRGVAKMSLDPADLTHDTTGLTAKELEALDDVFSKVYKAKYPIVGYTARRILNEDGSPNLDFKPEDQPHFDIKDEF.

A signal peptide spans 1–30 (MARPAPWWRLRLLAALVLALALVPVPSAWA). The Cytochrome b5 heme-binding domain maps to 43 to 128 (VRLFTEEELA…KELEALDDVF (86 aa)). The residue at position 135 (Lys-135) is an N6-acetyllysine.

The protein belongs to the cytochrome b5 family. MAPR subfamily. As to quaternary structure, interacts with PINK1 and PARK7. In the embryo, expressed most abundantly in brain and spinal cord. Widely expressed in adult tissues including brain, heart, lung and kidney. In brain, expressed in neurons but not in glial cells. In the hypothalamus is expressed primarily in the paraventricular nucleus (PVN), with lower levels of expression in the arcuate nucleus (ARC).

The protein localises to the secreted. Its subcellular location is the extracellular space. It localises to the mitochondrion. It is found in the endoplasmic reticulum. Functionally, acts as a neurotrophic factor in postnatal mature neurons, enhancing neuronal survival. Promotes cell proliferation and neurogenesis in undifferentiated neural pro-genitor cells at the embryonic stage and inhibits differentiation of astrocytes. Its neurotrophic activity is exerted via MAPK1/ERK2, MAPK3/ERK1 and AKT1/AKT pathways. Neurotrophic activity is enhanced by binding to heme. Also acts as an anorexigenic neurotrophic factor that contributes to energy balance. In Mus musculus (Mouse), this protein is Neudesin.